We begin with the raw amino-acid sequence, 199 residues long: Transcription factor 15 (199 aa).

The interval 25–67 is disordered; sequence EENRSESDASDQSFGCCEGPEAARRGPGPGGGRRAGGGGGAGP. Gly residues predominate over residues 51-66; the sequence is PGPGGGRRAGGGGGAG. Residues 72–124 enclose the bHLH domain; the sequence is RQRQAANARERDRTQSVNTAFTALRTLIPTEPVDRKLSKIETVRLASSYIAHL.

Heterodimer; efficient DNA binding requires dimerization with another bHLH protein, such as TCF3/E12. Interacts with MEOX2.

It is found in the nucleus. Functionally, early transcription factor that plays a key role in somitogenesis, paraxial mesoderm development and regulation of stem cell pluripotency. Essential for the mesenchymal to epithelial transition associated with somite formation. Required for somite morphogenesis, thereby regulating patterning of the axial skeleton and skeletal muscles. Required for proper localization of somite epithelium markers during the mesenchymal to epithelial transition. Also plays a key role in regulation of stem cell pluripotency. Promotes pluripotency exit of embryonic stem cells (ESCs) by priming ESCs for differentiation. Acts as a key regulator of self-renewal of hematopoietic stem cells (HSCs) by mediating HSCs quiescence and long-term self-renewal. Together with MEOX2, regulates transcription in heart endothelial cells to regulate fatty acid transport across heart endothelial cells. Acts by forming a heterodimer with another helix-loop-helix (bHLH) protein, such as TCF3/E12, that binds DNA on E-box motifs (5'-CANNTG-3') and activates transcription of target genes. The protein is Transcription factor 15 of Homo sapiens (Human).